Reading from the N-terminus, the 302-residue chain is NAD kinase 2 (302 aa).

Catalysis depends on aspartate 78, which acts as the Proton acceptor. NAD(+) is bound by residues 78–79, 152–153, aspartate 182, 193–198, and alanine 217; these read DG, NE, and TAYALS.

This sequence belongs to the NAD kinase family. The cofactor is a divalent metal cation.

Its subcellular location is the cytoplasm. The catalysed reaction is NAD(+) + ATP = ADP + NADP(+) + H(+). In terms of biological role, involved in the regulation of the intracellular balance of NAD and NADP, and is a key enzyme in the biosynthesis of NADP. Catalyzes specifically the phosphorylation on 2'-hydroxyl of the adenosine moiety of NAD to yield NADP. The protein is NAD kinase 2 of Prochlorococcus marinus (strain MIT 9313).